A 304-amino-acid polypeptide reads, in one-letter code: MNMTTYNLTHLKQLEAESIHIIREVAAEFDNPVMLYSIGKDSAVMLHLALKAFYPGKPPFPLLHVDTTWKFRDMISFRDHVAEKFGLDLIVHINEEGVKQGVGPFTHGSAKHTDIMKTQSLKQALNKYKFDAAFGGARRDEEKSRAKERVYSFRDEHHRWDPKNQRPELWNIYNGKVNKGESIRVFPLSNWTELDIWQYIYLENIDIVPLYYAAVRPVVERDGTLIMVDDDRMPLKEGEKPMMKSVRFRTLGCYPLTGAIESEANTLPDIIQEMLLATSSERQGRVIDHDSAGSMEQKKREGYF.

It belongs to the PAPS reductase family. CysD subfamily. In terms of assembly, heterodimer composed of CysD, the smaller subunit, and CysN.

It catalyses the reaction sulfate + ATP + H(+) = adenosine 5'-phosphosulfate + diphosphate. It functions in the pathway sulfur metabolism; hydrogen sulfide biosynthesis; sulfite from sulfate: step 1/3. Its function is as follows. With CysN forms the ATP sulfurylase (ATPS) that catalyzes the adenylation of sulfate producing adenosine 5'-phosphosulfate (APS) and diphosphate, the first enzymatic step in sulfur assimilation pathway. APS synthesis involves the formation of a high-energy phosphoric-sulfuric acid anhydride bond driven by GTP hydrolysis by CysN coupled to ATP hydrolysis by CysD. This is Sulfate adenylyltransferase subunit 2 2 from Marinobacter nauticus (strain ATCC 700491 / DSM 11845 / VT8) (Marinobacter aquaeolei).